A 523-amino-acid polypeptide reads, in one-letter code: 2-isopropylmalate synthase (523 aa).

Positions 5–267 constitute a Pyruvate carboxyltransferase domain; that stretch reads VIIFDTTLRD…ETGINAKEIH (263 aa). Residues Asp-14, His-202, His-204, and Asn-238 each coordinate Mn(2+). Positions 392-523 are regulatory domain; it reads GLQQLVVHSD…KQARTELGGV (132 aa).

This sequence belongs to the alpha-IPM synthase/homocitrate synthase family. LeuA type 1 subfamily. As to quaternary structure, homodimer. Requires Mn(2+) as cofactor.

The protein localises to the cytoplasm. The enzyme catalyses 3-methyl-2-oxobutanoate + acetyl-CoA + H2O = (2S)-2-isopropylmalate + CoA + H(+). It participates in amino-acid biosynthesis; L-leucine biosynthesis; L-leucine from 3-methyl-2-oxobutanoate: step 1/4. Functionally, catalyzes the condensation of the acetyl group of acetyl-CoA with 3-methyl-2-oxobutanoate (2-ketoisovalerate) to form 3-carboxy-3-hydroxy-4-methylpentanoate (2-isopropylmalate). This is 2-isopropylmalate synthase from Shewanella loihica (strain ATCC BAA-1088 / PV-4).